The chain runs to 179 residues: Lebocin-1/2 (179 aa).

The first 16 residues, 1–16, serve as a signal peptide directing secretion; sequence MYKFLVFSSVLVLFFA. The propeptide occupies 17–120; it reads QASCQRFIQP…QPIESHRNTR (104 aa). A disordered region spans residues 93–116; that stretch reads NNEASIEHSHHTVDTGLDQPIESH. Thr-135 carries O-linked (GalNAc...) threonine glycosylation. The propeptide occupies 153–179; sequence RRHASDDQEELRQYNEHFLIPRDIFQE.

This sequence belongs to the lebocin family. Post-translationally, O-glycosylation is important for the antibacterial activity of lebocin, O-linked glycan structure is a disaccharide (Gal-GalNAc) in case of lebocin 1 and a monosaccharide (GalNAc) in case of lebocin 2. As to expression, hemolymph. Produced in fat body.

The protein resides in the secreted. In terms of biological role, antibacterial peptide. The polypeptide is Lebocin-1/2 (Bombyx mori (Silk moth)).